The chain runs to 285 residues: Bifunctional protein FolD (285 aa).

NADP(+) contacts are provided by residues glycine 165–serine 167 and serine 190.

The protein belongs to the tetrahydrofolate dehydrogenase/cyclohydrolase family. As to quaternary structure, homodimer.

The catalysed reaction is (6R)-5,10-methylene-5,6,7,8-tetrahydrofolate + NADP(+) = (6R)-5,10-methenyltetrahydrofolate + NADPH. The enzyme catalyses (6R)-5,10-methenyltetrahydrofolate + H2O = (6R)-10-formyltetrahydrofolate + H(+). It participates in one-carbon metabolism; tetrahydrofolate interconversion. Its function is as follows. Catalyzes the oxidation of 5,10-methylenetetrahydrofolate to 5,10-methenyltetrahydrofolate and then the hydrolysis of 5,10-methenyltetrahydrofolate to 10-formyltetrahydrofolate. This Burkholderia pseudomallei (strain 1106a) protein is Bifunctional protein FolD.